A 2208-amino-acid chain; its full sequence is RNA-directed RNA polymerase L (2208 aa).

An endonuclease region spans residues 26-284; sequence KDALLSQVHP…LHQDSDTINC (259 aa). Mn(2+)-binding residues include glutamate 51, aspartate 89, and glutamate 102. Lysine 115 is a catalytic residue. The RdRp catalytic domain maps to 1171-1367; the sequence is CDMKMAVNNG…YLSSKLNKFV (197 aa). Aspartate 1329 contributes to the Mg(2+) binding site.

The protein belongs to the Bunyavirales RNA polymerase family. In terms of assembly, homomultimer; the oligomeric structure is essential for the polymerase activity. Interacts with nucleoprotein N. Interacts with protein Z; this interaction inhibits viral transcription and replication, Z partially blocks the product exit tunnel for the releasing nascent RNA product. The cofactor is Mn(2+). Requires Mg(2+) as cofactor.

The protein localises to the virion. The protein resides in the host cytoplasm. The catalysed reaction is RNA(n) + a ribonucleoside 5'-triphosphate = RNA(n+1) + diphosphate. Functionally, RNA-dependent RNA polymerase, which is responsible for the replication and transcription of the viral RNA genome using antigenomic RNA as an intermediate. During transcription, synthesizes subgenomic RNAs and assures their capping by a cap-snatching mechanism, which involves the endonuclease activity cleaving the host capped pre-mRNAs. These short capped RNAs are then used as primers for viral transcription. The 3'-end of subgenomic mRNAs molecules are heterogeneous and not polyadenylated. The replicase function is to direct synthesis of antigenomic and genomic RNA which are encapsidated and non capped. As a consequence of the use of the same enzyme for both transcription and replication, these mechanisms need to be well coordinated. These processes may be regulated by proteins N and Z in a dose-dependent manner. Z protein inhibits the viral polymerase L und thus the viral transcription and RNA synthesis. The polypeptide is RNA-directed RNA polymerase L (Homo sapiens (Human)).